The primary structure comprises 267 residues: Hydroxynaphthalene reductase-like protein Arp2 (267 aa).

NADP(+) is bound by residues I25, N45, D71, and N98. Residues S147 and S148 each act as proton donor in the active site. NADP(+) contacts are provided by Y162, K166, V195, and T197. Y162 acts as the Proton acceptor in catalysis. K166 serves as the catalytic Lowers pKa of active site Tyr.

This sequence belongs to the short-chain dehydrogenases/reductases (SDR) family.

Functionally, hydroxynaphthalene reductase-like protein; part of the Pks2 gene cluster that mediates the formation of infectious structures (appressoria), enabling these fungi to kill insects faster. The product of the Pks2 gene cluster is different from the one of Pks1 and has still not been identified. The protein is Hydroxynaphthalene reductase-like protein Arp2 of Metarhizium anisopliae (strain ARSEF 549).